The sequence spans 156 residues: Ribosomal RNA large subunit methyltransferase H (156 aa).

S-adenosyl-L-methionine is bound by residues Leu73, Gly104, and 123 to 128; that span reads LSALTL.

Belongs to the RNA methyltransferase RlmH family. In terms of assembly, homodimer.

The protein resides in the cytoplasm. The catalysed reaction is pseudouridine(1915) in 23S rRNA + S-adenosyl-L-methionine = N(3)-methylpseudouridine(1915) in 23S rRNA + S-adenosyl-L-homocysteine + H(+). Functionally, specifically methylates the pseudouridine at position 1915 (m3Psi1915) in 23S rRNA. In Shewanella sp. (strain ANA-3), this protein is Ribosomal RNA large subunit methyltransferase H.